We begin with the raw amino-acid sequence, 990 residues long: Membrane alanyl aminopeptidase (990 aa).

Residues phenylalanine 1 to threonine 15 form the signal peptide. Positions leucine 16 to aspartate 35 are cleaved as a propeptide — activation peptide. Residue asparagine 295 is glycosylated (N-linked (GlcNAc...) asparagine). Glycine 321–asparagine 325 serves as a coordination point for substrate. Residue histidine 357 coordinates Zn(2+). Glutamate 358 functions as the Proton acceptor in the catalytic mechanism. Residues histidine 361 and glutamate 380 each coordinate Zn(2+). N-linked (GlcNAc...) asparagine glycans are attached at residues asparagine 609, asparagine 623, and asparagine 752. Glycine 968 carries the GPI-anchor amidated glycine lipid modification. A propeptide spans serine 969 to alanine 990 (removed in mature form).

Belongs to the peptidase M1 family. Requires Zn(2+) as cofactor. Midgut brush-border membrane.

The protein localises to the cell membrane. Functionally, binds to the B.thuringiensis toxin, CryIA(C). The chain is Membrane alanyl aminopeptidase from Manduca sexta (Tobacco hawkmoth).